The following is a 205-amino-acid chain: Ribonuclease HII (205 aa).

The RNase H type-2 domain occupies 16 to 205 (VSEVGIDEVG…KSFLKKSNLF (190 aa)). Positions 22, 23, and 118 each coordinate a divalent metal cation.

The protein belongs to the RNase HII family. Requires Mn(2+) as cofactor. Mg(2+) serves as cofactor.

It localises to the cytoplasm. The enzyme catalyses Endonucleolytic cleavage to 5'-phosphomonoester.. Functionally, endonuclease that specifically degrades the RNA of RNA-DNA hybrids. The chain is Ribonuclease HII from Prochlorococcus marinus (strain MIT 9215).